Consider the following 468-residue polypeptide: MTKTLPKDFIFGGATAAYQAEGATHTDGKGPVAWDKYLEDNYWYTAEPASDFYNRYPVDLKLSEEFGVNGIRISIAWSRIFPTGKGEVNPKGVEYYHNLFAECHKRHVEPFVTLHHFDTPEALHSDGDFLNRENIEHFVNYAEFCFKEFSEVNYWTTFNEIGPIGDGQYLVGKFPPGIQYDLAKVFQSHHNMMVSHARAVKLFKDSGYSGEIGVVHALPTKYPFDANNPDDVRAAELEDIIHNKFILDATYLGKYSDKTMEGVNHILEVNGGELDLREEDFAALDAAKDLNDFLGINYYMSDWMQAFDGETEIIHNGKGEKGSSKYQIKGVGRRKAPVDVPKTDWDWIIFPQGLYDQIMRVKADYPNYKKIYITENGLGYKDEFVDNTVYDDGRIDYVKKHLEVISDAISDGANVKGYFMWSLMDVFSWSNGYEKRYGLFYVDFETQERYPKKSAYWYKKVAETQVIE.

D-galactose 6-phosphate-binding residues include Q19, H116, N159, E160, and N297. E160 acts as the Proton donor in catalysis. E375 functions as the Nucleophile in the catalytic mechanism. D-galactose 6-phosphate is bound by residues S428, W429, K435, and Y437.

This sequence belongs to the glycosyl hydrolase 1 family.

The enzyme catalyses a 6-phospho-beta-D-galactoside + H2O = D-galactose 6-phosphate + an alcohol. Its pathway is carbohydrate metabolism; lactose degradation; D-galactose 6-phosphate and beta-D-glucose from lactose 6-phosphate: step 1/1. In Streptococcus pyogenes serotype M28 (strain MGAS6180), this protein is 6-phospho-beta-galactosidase.